We begin with the raw amino-acid sequence, 601 residues long: Glutathione-regulated potassium-efflux system protein KefB (601 aa).

13 consecutive transmembrane segments (helical) span residues 4 to 24 (SDLL…VPLA), 29 to 49 (IGAV…GLGF), 55 to 75 (EILH…GLEL), 87 to 107 (IFGV…GLLM), 115 to 135 (AAVV…LQLM), 152 to 172 (VLLF…LLAG), 177 to 197 (HVNW…LIGG), 207 to 227 (FIAS…LVLG), 230 to 250 (LFME…GVLL), 268 to 288 (GLLL…GVLY), 291 to 311 (LLWV…VLYL), 326 to 346 (FAGV…LPAS), and 356 to 376 (ALLL…MKGI). The RCK N-terminal domain maps to 400-519 (KPQVIIVGFG…AGVTQFSRET (120 aa)).

This sequence belongs to the monovalent cation:proton antiporter 2 (CPA2) transporter (TC 2.A.37) family. KefB subfamily. As to quaternary structure, interacts with the regulatory subunit KefG.

It is found in the cell inner membrane. In terms of biological role, pore-forming subunit of a potassium efflux system that confers protection against electrophiles. Catalyzes K(+)/H(+) antiport. The sequence is that of Glutathione-regulated potassium-efflux system protein KefB from Klebsiella pneumoniae (strain 342).